A 117-amino-acid chain; its full sequence is Large ribosomal subunit protein uL18 (117 aa).

The protein belongs to the universal ribosomal protein uL18 family. Part of the 50S ribosomal subunit; part of the 5S rRNA/L5/L18/L25 subcomplex. Contacts the 5S and 23S rRNAs.

This is one of the proteins that bind and probably mediate the attachment of the 5S RNA into the large ribosomal subunit, where it forms part of the central protuberance. This Leuconostoc citreum (strain KM20) protein is Large ribosomal subunit protein uL18.